Reading from the N-terminus, the 588-residue chain is Ufm1-specific protease (588 aa).

Catalysis depends on residues C420, D544, and H546.

It belongs to the peptidase C78 family. As to quaternary structure, interacts with odr-4.

It is found in the endoplasmic reticulum membrane. It localises to the cytoplasm. Its subcellular location is the perinuclear region. Functionally, thiol protease which recognizes and hydrolyzes the peptide bond at the C-terminal Gly of ufm-1, a ubiquitin-like modifier protein bound to a number of target proteins. Required, with oct-4, for the localization of a subset of 7 transmembrane domain odorant receptors, including odr-10, to the cilia of olfactory neurons AWA and AWC. Operates in aggregation behavior, and responses to oxygen levels. The chain is Ufm1-specific protease from Caenorhabditis briggsae.